The chain runs to 143 residues: Transcriptional regulator MraZ (143 aa).

SpoVT-AbrB domains follow at residues 5–47 (EFRH…PMNE) and 76–119 (ASEC…SQEK).

It belongs to the MraZ family. In terms of assembly, forms oligomers.

It localises to the cytoplasm. The protein resides in the nucleoid. The sequence is that of Transcriptional regulator MraZ from Natranaerobius thermophilus (strain ATCC BAA-1301 / DSM 18059 / JW/NM-WN-LF).